The following is a 301-amino-acid chain: Ras-related GTP-binding protein A (301 aa).

GTP-binding positions include 9 to 16 (GRSESGKT), 57 to 61 (DCGGQ), and 122 to 125 (HKMD).

The protein belongs to the GTR/RAG GTP-binding protein family.

The protein resides in the cytoplasm. It is found in the nucleus. It localises to the lysosome. Functionally, guanine nucleotide-binding protein that plays a crucial role in the cellular response to amino acid availability through regulation of the TOR signaling cascade. The polypeptide is Ras-related GTP-binding protein A (ragA) (Dictyostelium discoideum (Social amoeba)).